Consider the following 156-residue polypeptide: Large ribosomal subunit protein uL15 (156 aa).

Residues 1-16 (MVRRFKRAVKYRRGSR) show a composition bias toward basic residues. The disordered stretch occupies residues 1-35 (MVRRFKRAVKYRRGSRTHGWGRVGQHRKSGGSGGK).

This sequence belongs to the universal ribosomal protein uL15 family. In terms of assembly, part of the 50S ribosomal subunit.

In terms of biological role, binds to the 23S rRNA. This Pyrobaculum neutrophilum (strain DSM 2338 / JCM 9278 / NBRC 100436 / V24Sta) (Thermoproteus neutrophilus) protein is Large ribosomal subunit protein uL15.